The following is a 167-amino-acid chain: NAD(P)H-quinone oxidoreductase subunit I, chloroplastic (167 aa).

2 consecutive 4Fe-4S ferredoxin-type domains span residues Gly55–Lys84 and Leu95–Glu124. [4Fe-4S] cluster is bound by residues Cys64, Cys67, Cys70, Cys74, Cys104, Cys107, Cys110, and Cys114.

The protein belongs to the complex I 23 kDa subunit family. In terms of assembly, NDH is composed of at least 16 different subunits, 5 of which are encoded in the nucleus. [4Fe-4S] cluster serves as cofactor.

Its subcellular location is the plastid. The protein resides in the chloroplast thylakoid membrane. The enzyme catalyses a plastoquinone + NADH + (n+1) H(+)(in) = a plastoquinol + NAD(+) + n H(+)(out). It carries out the reaction a plastoquinone + NADPH + (n+1) H(+)(in) = a plastoquinol + NADP(+) + n H(+)(out). NDH shuttles electrons from NAD(P)H:plastoquinone, via FMN and iron-sulfur (Fe-S) centers, to quinones in the photosynthetic chain and possibly in a chloroplast respiratory chain. The immediate electron acceptor for the enzyme in this species is believed to be plastoquinone. Couples the redox reaction to proton translocation, and thus conserves the redox energy in a proton gradient. The chain is NAD(P)H-quinone oxidoreductase subunit I, chloroplastic from Arabis hirsuta (Hairy rock-cress).